Consider the following 204-residue polypeptide: ADP-ribosylation factor-like protein 15 (204 aa).

GTP contacts are provided by residues 39 to 46, 82 to 86, and 142 to 145; these read GLTGSGKT, ELGGA, and NHQD.

This sequence belongs to the small GTPase superfamily. Arf family.

This Pongo abelii (Sumatran orangutan) protein is ADP-ribosylation factor-like protein 15 (ARL15).